Reading from the N-terminus, the 324-residue chain is Alkanal monooxygenase beta chain (324 aa).

This sequence belongs to the bacterial luciferase oxidoreductase family. Heterodimer of an alpha and a beta chain.

It catalyses the reaction a long-chain fatty aldehyde + FMNH2 + O2 = a long-chain fatty acid + hnu + FMN + H2O + 2 H(+). In terms of biological role, light-emitting reaction in luminous bacteria. The specific role of the beta subunit is unknown, but it is absolutely required for bioluminescence activity. The chain is Alkanal monooxygenase beta chain (luxB) from Vibrio harveyi (Beneckea harveyi).